We begin with the raw amino-acid sequence, 237 residues long: Nodulation protein NolA (237 aa).

The HTH merR-type domain maps to 10–79; the sequence is RWRIGELAGA…LQEIRRAMDG (70 aa). Residues 13 to 32 constitute a DNA-binding region (H-T-H motif); it reads IGELAGATGVTVRTLHHYEH.

In terms of biological role, involved in genotype-specific nodulation of soybeans. In Bradyrhizobium sp. (strain NC92), this protein is Nodulation protein NolA (nolA).